The primary structure comprises 186 residues: ATP-dependent protease subunit HslV (186 aa).

The active site involves Thr14. Na(+)-binding residues include Ala168, Cys171, and Thr174.

It belongs to the peptidase T1B family. HslV subfamily. As to quaternary structure, a double ring-shaped homohexamer of HslV is capped on each side by a ring-shaped HslU homohexamer. The assembly of the HslU/HslV complex is dependent on binding of ATP.

It localises to the cytoplasm. It catalyses the reaction ATP-dependent cleavage of peptide bonds with broad specificity.. With respect to regulation, allosterically activated by HslU binding. Its function is as follows. Protease subunit of a proteasome-like degradation complex believed to be a general protein degrading machinery. The protein is ATP-dependent protease subunit HslV of Bradyrhizobium sp. (strain BTAi1 / ATCC BAA-1182).